The sequence spans 222 residues: Nucleoside triphosphate pyrophosphatase (222 aa).

The Proton acceptor role is filled by Asp-82.

The protein belongs to the Maf family. It depends on a divalent metal cation as a cofactor.

It is found in the cytoplasm. It carries out the reaction a ribonucleoside 5'-triphosphate + H2O = a ribonucleoside 5'-phosphate + diphosphate + H(+). The catalysed reaction is a 2'-deoxyribonucleoside 5'-triphosphate + H2O = a 2'-deoxyribonucleoside 5'-phosphate + diphosphate + H(+). In terms of biological role, nucleoside triphosphate pyrophosphatase. May have a dual role in cell division arrest and in preventing the incorporation of modified nucleotides into cellular nucleic acids. This is Nucleoside triphosphate pyrophosphatase from Mycobacterium bovis (strain ATCC BAA-935 / AF2122/97).